A 185-amino-acid polypeptide reads, in one-letter code: Adenine phosphoribosyltransferase (185 aa).

Belongs to the purine/pyrimidine phosphoribosyltransferase family. In terms of assembly, homodimer.

Its subcellular location is the cytoplasm. The enzyme catalyses AMP + diphosphate = 5-phospho-alpha-D-ribose 1-diphosphate + adenine. It participates in purine metabolism; AMP biosynthesis via salvage pathway; AMP from adenine: step 1/1. Its function is as follows. Catalyzes a salvage reaction resulting in the formation of AMP, that is energically less costly than de novo synthesis. The sequence is that of Adenine phosphoribosyltransferase from Rubrobacter xylanophilus (strain DSM 9941 / JCM 11954 / NBRC 16129 / PRD-1).